A 239-amino-acid polypeptide reads, in one-letter code: Uridylate kinase (239 aa).

13 to 16 is an ATP binding site; the sequence is KVSG. Gly55 is a binding site for UMP. Positions 56 and 60 each coordinate ATP. UMP is bound by residues Asp75 and 136-143; that span reads TGNPFCTT. ATP contacts are provided by Thr163, Gln164, Tyr169, and Asp172.

This sequence belongs to the UMP kinase family. In terms of assembly, homohexamer.

Its subcellular location is the cytoplasm. The enzyme catalyses UMP + ATP = UDP + ADP. It functions in the pathway pyrimidine metabolism; CTP biosynthesis via de novo pathway; UDP from UMP (UMPK route): step 1/1. Its activity is regulated as follows. Inhibited by UTP. Catalyzes the reversible phosphorylation of UMP to UDP. In Rickettsia bellii (strain RML369-C), this protein is Uridylate kinase.